Reading from the N-terminus, the 212-residue chain is Probable GTP-binding protein EngB (212 aa).

The EngB-type G domain maps to 38-210 (SLPEIAFVGK…KASLAKCIKP (173 aa)). GTP contacts are provided by residues 46–53 (GKSNVGKS), 73–77 (GRTRQ), 91–94 (DLPG), 158–161 (TKSD), and 189–191 (VSN). S53 and T75 together coordinate Mg(2+).

This sequence belongs to the TRAFAC class TrmE-Era-EngA-EngB-Septin-like GTPase superfamily. EngB GTPase family. Mg(2+) serves as cofactor.

Necessary for normal cell division and for the maintenance of normal septation. The chain is Probable GTP-binding protein EngB from Rickettsia conorii (strain ATCC VR-613 / Malish 7).